Reading from the N-terminus, the 116-residue chain is Large ribosomal subunit protein bL20 (116 aa).

It belongs to the bacterial ribosomal protein bL20 family.

Binds directly to 23S ribosomal RNA and is necessary for the in vitro assembly process of the 50S ribosomal subunit. It is not involved in the protein synthesizing functions of that subunit. The protein is Large ribosomal subunit protein bL20 of Mycoplasmopsis pulmonis (strain UAB CTIP) (Mycoplasma pulmonis).